Consider the following 466-residue polypeptide: Ribulose bisphosphate carboxylase large chain (466 aa).

At lysine 5 the chain carries N6,N6,N6-trimethyllysine. Residues asparagine 114 and threonine 164 each coordinate substrate. The active-site Proton acceptor is lysine 166. Lysine 168 contributes to the substrate binding site. Residues lysine 192, aspartate 194, and glutamate 195 each coordinate Mg(2+). Lysine 192 carries the N6-carboxylysine modification. The active-site Proton acceptor is the histidine 285. Arginine 286, histidine 318, and serine 370 together coordinate substrate.

The protein belongs to the RuBisCO large chain family. Type I subfamily. Heterohexadecamer of 8 large chains and 8 small chains; disulfide-linked. The disulfide link is formed within the large subunit homodimers. Requires Mg(2+) as cofactor. In terms of processing, the disulfide bond which can form in the large chain dimeric partners within the hexadecamer appears to be associated with oxidative stress and protein turnover.

It is found in the plastid. It localises to the chloroplast. The catalysed reaction is 2 (2R)-3-phosphoglycerate + 2 H(+) = D-ribulose 1,5-bisphosphate + CO2 + H2O. It carries out the reaction D-ribulose 1,5-bisphosphate + O2 = 2-phosphoglycolate + (2R)-3-phosphoglycerate + 2 H(+). Functionally, ruBisCO catalyzes two reactions: the carboxylation of D-ribulose 1,5-bisphosphate, the primary event in carbon dioxide fixation, as well as the oxidative fragmentation of the pentose substrate in the photorespiration process. Both reactions occur simultaneously and in competition at the same active site. The chain is Ribulose bisphosphate carboxylase large chain from Cercidiphyllum japonicum (Katsura tree).